Consider the following 59-residue polypeptide: Small ribosomal subunit protein bS21 (59 aa).

Over residues 32 to 42 (VRKREHYDKPS) the composition is skewed to basic and acidic residues. The segment at 32-59 (VRKREHYDKPSVKRKKKAEAARRKNAKK) is disordered. The segment covering 43–59 (VKRKKKAEAARRKNAKK) has biased composition (basic residues).

The protein belongs to the bacterial ribosomal protein bS21 family.

This is Small ribosomal subunit protein bS21 from Clostridioides difficile (strain 630) (Peptoclostridium difficile).